Here is a 108-residue protein sequence, read N- to C-terminus: ATPase inhibitor, mitochondrial (108 aa).

Residues 1–25 (MAATALAVRSRIGAWSVWAMQSRGF) constitute a mitochondrion transit peptide. The segment at 25 to 48 (FSSDTPEGVRSGAGAVRDAGGAFG) is disordered. Residues 26–52 (SSDTPEGVRSGAGAVRDAGGAFGKKEQ) are N-terminal inhibitory region. Residues 69–108 (ALKKHHENEISHHVKEIERLQKEIERHKQSIKKLKNDDDD) adopt a coiled-coil conformation. Residues 74–106 (HENEISHHVKEIERLQKEIERHKQSIKKLKNDD) form an antiparallel alpha-helical coiled coil region region. An N6-succinyllysine modification is found at Lys103.

The protein belongs to the ATPase inhibitor family. Homodimer; represents the active form and is present at a pH value below 6.5. Homotetramer; represents the inactive form and is present at a pH value above 7.0.

It is found in the mitochondrion. Its function is as follows. Endogenous F(1)F(o)-ATPase inhibitor limiting ATP depletion when the mitochondrial membrane potential falls below a threshold and the F(1)F(o)-ATP synthase starts hydrolyzing ATP to pump protons out of the mitochondrial matrix. Required to avoid the consumption of cellular ATP when the F(1)F(o)-ATP synthase enzyme acts as an ATP hydrolase. Indirectly acts as a regulator of heme synthesis in erythroid tissues: regulates heme synthesis by modulating the mitochondrial pH and redox potential, allowing FECH to efficiently catalyze the incorporation of iron into protoporphyrin IX to produce heme. The chain is ATPase inhibitor, mitochondrial from Sus scrofa (Pig).